The following is a 491-amino-acid chain: GTPase Der (491 aa).

2 consecutive EngA-type G domains span residues P54 to S217 and R229 to D402. GTP is bound by residues G60–S67, D107–W111, N169–D172, G235–S242, D282–I286, and N347–D350. The region spanning R403–E485 is the KH-like domain.

The protein belongs to the TRAFAC class TrmE-Era-EngA-EngB-Septin-like GTPase superfamily. EngA (Der) GTPase family. Associates with the 50S ribosomal subunit.

Its function is as follows. GTPase that plays an essential role in the late steps of ribosome biogenesis. The chain is GTPase Der from Paenarthrobacter aurescens (strain TC1).